The chain runs to 669 residues: Major S-layer protein (669 aa).

An N-terminal signal peptide occupies residues 1–24 (MKRFAAVSLAALMLLTVFASAASA). N36, N70, N116, N600, and N607 each carry an N-linked (GlcNAc...) asparagine glycan. Residues 588–648 (DGEVVDDDED…PTEADGTTPG (61 aa)) form a disordered region. Residues 590–627 (EVVDDDEDDDNVTEPVDNDTEVEEPTEEPTEGPTEEPT) are compositionally biased toward acidic residues. The helical transmembrane segment at 645–665 (TTPGFGVVLGLVGLLAVVYLV) threads the bilayer.

Belongs to the Methanosarcinales S-layer protein family. In terms of processing, glycosylated.

It localises to the secreted. The protein localises to the cell wall. The protein resides in the S-layer. Its subcellular location is the cell membrane. Its function is as follows. S-layer protein. The S-layer is a paracrystalline mono-layered assembly of proteins which coat the surface of the cell. The polypeptide is Major S-layer protein (Methanosarcina mazei (strain ATCC BAA-159 / DSM 3647 / Goe1 / Go1 / JCM 11833 / OCM 88) (Methanosarcina frisia)).